The following is a 205-amino-acid chain: Holliday junction resolvase RecU (205 aa).

Thr83, Asp85, Glu98, and Gln117 together coordinate Mg(2+).

This sequence belongs to the RecU family. The cofactor is Mg(2+).

Its subcellular location is the cytoplasm. It carries out the reaction Endonucleolytic cleavage at a junction such as a reciprocal single-stranded crossover between two homologous DNA duplexes (Holliday junction).. Endonuclease that resolves Holliday junction intermediates in genetic recombination. Cleaves mobile four-strand junctions by introducing symmetrical nicks in paired strands. Promotes annealing of linear ssDNA with homologous dsDNA. Required for DNA repair, homologous recombination and chromosome segregation. The sequence is that of Holliday junction resolvase RecU from Streptococcus suis (strain 98HAH33).